The primary structure comprises 464 residues: Glutamate--tRNA ligase (464 aa).

A 'HIGH' region motif is present at residues 10–20; the sequence is PSPTGHLHLGG. Zn(2+) is bound by residues Cys99, Cys101, Cys126, and Glu128. A 'KMSKS' region motif is present at residues 236–240; it reads KLSKR. Lys239 provides a ligand contact to ATP.

It belongs to the class-I aminoacyl-tRNA synthetase family. Glutamate--tRNA ligase type 1 subfamily. As to quaternary structure, monomer. The cofactor is Zn(2+).

It is found in the cytoplasm. It carries out the reaction tRNA(Glu) + L-glutamate + ATP = L-glutamyl-tRNA(Glu) + AMP + diphosphate. In terms of biological role, catalyzes the attachment of glutamate to tRNA(Glu) in a two-step reaction: glutamate is first activated by ATP to form Glu-AMP and then transferred to the acceptor end of tRNA(Glu). In Oleidesulfovibrio alaskensis (strain ATCC BAA-1058 / DSM 17464 / G20) (Desulfovibrio alaskensis), this protein is Glutamate--tRNA ligase.